The following is a 447-amino-acid chain: Imidazolonepropionase (447 aa).

The Fe(3+) site is built by histidine 85 and histidine 87. Histidine 85 and histidine 87 together coordinate Zn(2+). 3 residues coordinate 4-imidazolone-5-propanoate: arginine 94, tyrosine 157, and histidine 190. Position 157 (tyrosine 157) interacts with N-formimidoyl-L-glutamate. A Fe(3+)-binding site is contributed by histidine 255. A Zn(2+)-binding site is contributed by histidine 255. 4-imidazolone-5-propanoate is bound at residue glutamate 258. Aspartate 329 serves as a coordination point for Fe(3+). Zn(2+) is bound at residue aspartate 329. N-formimidoyl-L-glutamate-binding residues include asparagine 331 and glycine 333. Residue serine 334 coordinates 4-imidazolone-5-propanoate.

The protein belongs to the metallo-dependent hydrolases superfamily. HutI family. It depends on Zn(2+) as a cofactor. Fe(3+) is required as a cofactor.

It localises to the cytoplasm. It catalyses the reaction 4-imidazolone-5-propanoate + H2O = N-formimidoyl-L-glutamate. Its pathway is amino-acid degradation; L-histidine degradation into L-glutamate; N-formimidoyl-L-glutamate from L-histidine: step 3/3. Its function is as follows. Catalyzes the hydrolytic cleavage of the carbon-nitrogen bond in imidazolone-5-propanoate to yield N-formimidoyl-L-glutamate. It is the third step in the universal histidine degradation pathway. This chain is Imidazolonepropionase, found in Shouchella clausii (strain KSM-K16) (Alkalihalobacillus clausii).